The primary structure comprises 221 residues: Imidazoleglycerol-phosphate dehydratase (221 aa).

The protein belongs to the imidazoleglycerol-phosphate dehydratase family.

It carries out the reaction D-erythro-1-(imidazol-4-yl)glycerol 3-phosphate = 3-(imidazol-4-yl)-2-oxopropyl phosphate + H2O. It participates in amino-acid biosynthesis; L-histidine biosynthesis; L-histidine from 5-phospho-alpha-D-ribose 1-diphosphate: step 6/9. This chain is Imidazoleglycerol-phosphate dehydratase (HIS3), found in Kluyveromyces marxianus (Yeast).